A 484-amino-acid polypeptide reads, in one-letter code: Glutamyl-tRNA(Gln) amidotransferase subunit A (484 aa).

Residues Lys-78 and Ser-153 each act as charge relay system in the active site. The active-site Acyl-ester intermediate is Ser-177.

Belongs to the amidase family. GatA subfamily. In terms of assembly, heterotrimer of A, B and C subunits.

It catalyses the reaction L-glutamyl-tRNA(Gln) + L-glutamine + ATP + H2O = L-glutaminyl-tRNA(Gln) + L-glutamate + ADP + phosphate + H(+). Its function is as follows. Allows the formation of correctly charged Gln-tRNA(Gln) through the transamidation of misacylated Glu-tRNA(Gln) in organisms which lack glutaminyl-tRNA synthetase. The reaction takes place in the presence of glutamine and ATP through an activated gamma-phospho-Glu-tRNA(Gln). The chain is Glutamyl-tRNA(Gln) amidotransferase subunit A from Thermodesulfovibrio yellowstonii (strain ATCC 51303 / DSM 11347 / YP87).